An 83-amino-acid chain; its full sequence is Retinal cone rhodopsin-sensitive cGMP 3',5'-cyclic phosphodiesterase subunit gamma (83 aa).

A compositionally biased stretch (low complexity) spans 1–19 (MSDNTTLAPPAASQAPATP). The disordered stretch occupies residues 1–51 (MSDNTTLAPPAASQAPATPRKGPPKFKQRQTRQFKSKPPKKGVKGFGDDIP). Positions 22–43 (GPPKFKQRQTRQFKSKPPKKGV) are enriched in basic residues.

This sequence belongs to the rod/cone cGMP-PDE gamma subunit family. As to quaternary structure, tetramer composed of two catalytic chains (alpha and beta), and two inhibitory chains (gamma).

The catalysed reaction is 3',5'-cyclic GMP + H2O = GMP + H(+). Its function is as follows. Participates in processes of transmission and amplification of the visual signal. cGMP-PDEs are the effector molecules in G-protein-mediated phototransduction in vertebrate rods and cones. The protein is Retinal cone rhodopsin-sensitive cGMP 3',5'-cyclic phosphodiesterase subunit gamma (PDE6H) of Ictidomys tridecemlineatus (Thirteen-lined ground squirrel).